The sequence spans 292 residues: Fat storage-inducing transmembrane protein 1 (292 aa).

At 1–18 (MERGPTVGAGLGAGTRVR) the chain is on the lumenal side. Residues 19-39 (ALLGCLVKVLLWVASALLYFG) form a helical membrane-spanning segment. The Cytoplasmic portion of the chain corresponds to 40–54 (SEQAARLLGSPCLRR). A helical transmembrane segment spans residues 55 to 75 (LYHAWLAAVVIFGPLLQFHVN). The Lumenal portion of the chain corresponds to 76 to 94 (SRTIFASHGNFFNIKFVNS). Residues 95–115 (AWGWTCTFLGGFVLLVVFLAT) form a helical membrane-spanning segment. Over 116–141 (RRVAVTARHLSRLVVGAAVWRGAGRA) the chain is Cytoplasmic. Residues 142-162 (FLLIEDLTGSCFEPLPQGLLL) form a helical membrane-spanning segment. The Lumenal segment spans residues 163–187 (HELPDRKSCLAAGHQWRGYTVSSHT). Residue His186 is part of the active site. Residues 188–208 (FLLTFCCLLMAEEAAVFAKYL) form a helical membrane-spanning segment. The Cytoplasmic portion of the chain corresponds to 209–220 (AHGLPAGAPLRL). Residues 221-241 (VFLLNVLLLGLWNFLLLCTVI) form a helical membrane-spanning segment. At 242–249 (YFHQYTHK) the chain is on the lumenal side. The active site involves His244. Residues 250-270 (VVGAAVGTFAWYLTYGSWYHQ) form a helical membrane-spanning segment. The Cytoplasmic portion of the chain corresponds to 271 to 292 (PWSPGIPGHGLFPRSRSMRKHN).

Belongs to the FIT family. FIT1 subfamily. As to expression, predominantly expressed in skeletal muscle and at lower levels in the heart (at protein level). In the heart, mRNA expression levels do not correlate well with protein levels, suggesting post-transcriptional regulation in this organ.

The protein localises to the endoplasmic reticulum membrane. Its function is as follows. Plays an important role in the formation of lipid droplets (LDs) which are storage organelles at the center of lipid and energy homeostasis. Directly binds to diacylglycerol (DAGs) and triacylglycerol. This is Fat storage-inducing transmembrane protein 1 from Mus musculus (Mouse).